Consider the following 110-residue polypeptide: Protein P2 (110 aa).

A compositionally biased stretch (polar residues) spans 72-82 (KLPTTSGSSSA). The tract at residues 72–110 (KLPTTSGSSSAGAIVPAGSNTQGQYKAPPKKGIKRKYPA) is disordered. The segment covering 99-110 (PPKKGIKRKYPA) has biased composition (basic residues).

This Oryza sativa (Rice) protein is Protein P2.